Consider the following 280-residue polypeptide: tRNA pseudouridine synthase A (280 aa).

Aspartate 60 (nucleophile) is an active-site residue. Residue tyrosine 119 participates in substrate binding.

It belongs to the tRNA pseudouridine synthase TruA family. Homodimer.

It catalyses the reaction uridine(38/39/40) in tRNA = pseudouridine(38/39/40) in tRNA. Its function is as follows. Formation of pseudouridine at positions 38, 39 and 40 in the anticodon stem and loop of transfer RNAs. This Treponema pallidum (strain Nichols) protein is tRNA pseudouridine synthase A.